A 229-amino-acid chain; its full sequence is Uracil-DNA glycosylase (229 aa).

Catalysis depends on Asp64, which acts as the Proton acceptor.

It belongs to the uracil-DNA glycosylase (UDG) superfamily. UNG family.

It localises to the cytoplasm. The catalysed reaction is Hydrolyzes single-stranded DNA or mismatched double-stranded DNA and polynucleotides, releasing free uracil.. Excises uracil residues from the DNA which can arise as a result of misincorporation of dUMP residues by DNA polymerase or due to deamination of cytosine. This chain is Uracil-DNA glycosylase, found in Salmonella agona (strain SL483).